The sequence spans 246 residues: Probable S-methyl-5'-thioinosine phosphorylase (246 aa).

Residues T10 and 52-53 (RH) each bind phosphate. Position 185 (M185) interacts with substrate. A phosphate-binding site is contributed by T186. 209 to 211 (NPA) lines the substrate pocket.

The protein belongs to the PNP/MTAP phosphorylase family. MTAP subfamily. In terms of assembly, homotrimer.

The enzyme catalyses S-methyl-5'-thioinosine + phosphate = 5-(methylsulfanyl)-alpha-D-ribose 1-phosphate + hypoxanthine. The protein operates within purine metabolism; purine nucleoside salvage. Functionally, catalyzes the reversible phosphorylation of S-methyl-5'-thioinosine (MTI) to hypoxanthine and 5-methylthioribose-1-phosphate. Involved in the breakdown of S-methyl-5'-thioadenosine (MTA), a major by-product of polyamine biosynthesis. Catabolism of (MTA) occurs via deamination to MTI and phosphorolysis to hypoxanthine. This is Probable S-methyl-5'-thioinosine phosphorylase from Pseudomonas syringae pv. tomato (strain ATCC BAA-871 / DC3000).